Consider the following 69-residue polypeptide: Small ribosomal subunit protein bS21 (69 aa).

Positions 49-69 are disordered; the sequence is IESAKRKAEKKKRLFSKKDKA.

Belongs to the bacterial ribosomal protein bS21 family.

The sequence is that of Small ribosomal subunit protein bS21 from Leptospira borgpetersenii serovar Hardjo-bovis (strain JB197).